A 329-amino-acid chain; its full sequence is GTP 3',8-cyclase (329 aa).

The Radical SAM core domain occupies 8-234 (AFARKFYYLR…QLRQRSDGPA (227 aa)). Residue R17 coordinates GTP. [4Fe-4S] cluster is bound by residues C24 and C28. Y30 provides a ligand contact to S-adenosyl-L-methionine. C31 lines the [4Fe-4S] cluster pocket. A GTP-binding site is contributed by R68. G72 contributes to the S-adenosyl-L-methionine binding site. Position 99 (T99) interacts with GTP. S123 lines the S-adenosyl-L-methionine pocket. GTP is bound at residue K160. Position 194 (M194) interacts with S-adenosyl-L-methionine. [4Fe-4S] cluster contacts are provided by C257 and C260. 262-264 (RLR) serves as a coordination point for GTP. C274 is a [4Fe-4S] cluster binding site.

The protein belongs to the radical SAM superfamily. MoaA family. As to quaternary structure, monomer and homodimer. Requires [4Fe-4S] cluster as cofactor.

The enzyme catalyses GTP + AH2 + S-adenosyl-L-methionine = (8S)-3',8-cyclo-7,8-dihydroguanosine 5'-triphosphate + 5'-deoxyadenosine + L-methionine + A + H(+). Its pathway is cofactor biosynthesis; molybdopterin biosynthesis. Its function is as follows. Catalyzes the cyclization of GTP to (8S)-3',8-cyclo-7,8-dihydroguanosine 5'-triphosphate. In Salmonella paratyphi B (strain ATCC BAA-1250 / SPB7), this protein is GTP 3',8-cyclase.